We begin with the raw amino-acid sequence, 406 residues long: Tyrosine--tRNA ligase (406 aa).

Tyr35 is a binding site for L-tyrosine. The 'HIGH' region signature appears at 40-49; the sequence is PTADSLHVGH. Tyr168 and Gln172 together coordinate L-tyrosine. The 'KMSKS' region signature appears at 228–232; the sequence is KMGKT. ATP is bound at residue Lys231. Residues 340-404 form the S4 RNA-binding domain; sequence LPILDVMAST…RGKKNYNKIE (65 aa).

The protein belongs to the class-I aminoacyl-tRNA synthetase family. TyrS type 1 subfamily. In terms of assembly, homodimer.

The protein localises to the cytoplasm. The catalysed reaction is tRNA(Tyr) + L-tyrosine + ATP = L-tyrosyl-tRNA(Tyr) + AMP + diphosphate + H(+). Functionally, catalyzes the attachment of tyrosine to tRNA(Tyr) in a two-step reaction: tyrosine is first activated by ATP to form Tyr-AMP and then transferred to the acceptor end of tRNA(Tyr). In Clostridium beijerinckii (strain ATCC 51743 / NCIMB 8052) (Clostridium acetobutylicum), this protein is Tyrosine--tRNA ligase.